The primary structure comprises 4377 residues: E3 ubiquitin-protein ligase HUWE1 (4377 aa).

Ser648 and Ser649 each carry phosphoserine. 3 disordered regions span residues 706-758 (KADG…VVGT), 978-1001 (DEKA…AGSM), and 1018-1038 (TLAP…KSKI). The span at 725-735 (ASSEDEEEEEV) shows a compositional bias: acidic residues. The span at 737-756 (AMQSFNSAQQNETEPNQQVV) shows a compositional bias: polar residues. A Phosphoserine modification is found at Ser740. Ser1084 bears the Phosphoserine mark. The span at 1291–1302 (LSKEKEGSRGEE) shows a compositional bias: basic and acidic residues. The interval 1291–1320 (LSKEKEGSRGEEEAGQEEGGSRREPQVNQQ) is disordered. In terms of domain architecture, UBA spans 1316–1355 (QVNQQQLQQLMDMGFTREHAMEALLNTSTMEQATEYLLTH). Ser1368, Ser1370, Ser1382, and Ser1395 each carry phosphoserine. A UIM domain is found at 1370–1389 (SEEDQMMRAIAMSLGQDIPM). A disordered region spans residues 1396 to 1415 (PEEVACRKEEEERKAREKQE). Positions 1603–1680 (RAQMTKYLQS…ETGNRRPVML (78 aa)) constitute a WWE domain. The tract at residues 1690–1733 (KNSKSSNGQELEKTLEESKETDIKHKENKGNDIPLALESTNTEK) is disordered. Over residues 1699 to 1719 (ELEKTLEESKETDIKHKENKG) the composition is skewed to basic and acidic residues. Position 1907 is a phosphoserine (Ser1907). 3 disordered regions span residues 2019 to 2065 (APAE…SKPL), 2262 to 2343 (SLFG…QEMQ), and 2355 to 2479 (LLER…ASPL). Positions 2022–2033 (ETSTTGTSQGEA) are enriched in polar residues. Thr2035 carries the phosphothreonine modification. Residues 2037-2057 (EETREGKKDKEGDRTSEEGKQ) show a composition bias toward basic and acidic residues. 2 stretches are compositionally biased toward low complexity: residues 2262–2271 (SLFGSKSASS) and 2278–2291 (DAQG…SHQQ). Residue Ser2266 is modified to Phosphoserine. N6-acetyllysine is present on Lys2267. 2 stretches are compositionally biased toward acidic residues: residues 2295–2306 (EPGEAEVQEEDH) and 2314–2325 (ADGDIMDGEAET). 3 positions are modified to phosphoserine: Ser2362, Ser2365, and Ser2391. Over residues 2388–2398 (SNLSQASTLQA) the composition is skewed to polar residues. The segment covering 2408 to 2472 (DPEDEEEHTQ…SEMELDEDYP (65 aa)) has biased composition (acidic residues). A phosphoserine mark is found at Ser2527, Ser2532, and Ser2535. Residue Thr2554 is modified to Phosphothreonine. Residues Ser2584, Ser2595, and Ser2619 each carry the phosphoserine modification. The span at 2704–2716 (IIDKGKEDKENRD) shows a compositional bias: basic and acidic residues. Disordered stretches follow at residues 2704 to 2970 (IIDK…GVDP), 2991 to 3012 (IRPP…VGNP), and 3036 to 3059 (QQRA…MDPV). Residues 2717 to 2736 (QSAQCTVTKTNDSTEQNVSD) are compositionally biased toward polar residues. Residues 2738–2756 (TPMPDSYPTTPSSTDAPTS) are compositionally biased toward low complexity. At Thr2751 the chain carries Phosphothreonine. 3 stretches are compositionally biased toward polar residues: residues 2818-2835 (AETT…TSLS), 2847-2864 (AVSS…SLAS), and 2877-2890 (AGSS…SSTP). Phosphoserine occurs at positions 2826, 2833, 2835, 2861, 2887, and 2888. Thr2889 is modified (phosphothreonine). Low complexity-rich tracts occupy residues 2913–2932 (PPED…RDSA) and 2993–3007 (PPTR…SAPA). Residue Ser2918 is modified to Phosphoserine. Phosphoserine is present on residues Ser3116, Ser3117, Ser3122, Ser3127, and Ser3135. An Omega-N-methylarginine modification is found at Arg3149. Disordered regions lie at residues 3243-3266 (PKLS…SHEN), 3352-3383 (TQQR…SSSS), 3405-3429 (GKNS…SLEA), 3471-3514 (SEVQ…TTPV), and 3539-3566 (TPTT…EGGS). Over residues 3355–3369 (RTKETNCESDRERGS) the composition is skewed to basic and acidic residues. Over residues 3370 to 3383 (KQACSPCSSQSSSS) the composition is skewed to low complexity. 2 stretches are compositionally biased toward low complexity: residues 3475-3503 (TNSS…ATAP) and 3539-3552 (TPTT…TSTT). 6 positions are modified to phosphoserine: Ser3557, Ser3663, Ser3753, Ser3758, Ser3760, and Ser3761. The interval 3738–3759 (TRRANKKAKQTGRLGSSGLGSA) is disordered. A compositionally biased stretch (low complexity) spans 3749-3759 (GRLGSSGLGSA). Disordered stretches follow at residues 3782-3850 (EGQR…LPLL) and 3897-3951 (RESK…SSSL). Positions 3794–3803 (TSESSNQSET) are enriched in polar residues. Residues Ser3810, Ser3818, and Ser3830 each carry the phosphoserine modification. Residues 3817–3828 (PSPSAQDTQSIV) are compositionally biased toward polar residues. Thr3833 is subject to Phosphothreonine. Basic and acidic residues-rich tracts occupy residues 3836–3845 (GEKEKEEKPP) and 3897–3918 (RESK…KDEP). A phosphoserine mark is found at Ser3909 and Ser3922. Pro residues predominate over residues 3919-3928 (PPLSPAPLTP). Phosphothreonine is present on residues Thr3927 and Thr3930. Positions 3941–3951 (EPSSMHISSSL) are enriched in polar residues. An HECT domain is found at 4041-4377 (SPEEMKNRLY…QECSEGFGLA (337 aa)). Position 4274 is a phosphotyrosine (Tyr4274). Cys4344 (glycyl thioester intermediate) is an active-site residue.

This sequence belongs to the UPL family. TOM1/PTR1 subfamily. In terms of assembly, interacts with isoform p19ARF of CDKN2A which strongly inhibits HUWE1 ubiquitin ligase activity. Interacts with MYCN, POLB and CDC6. Interacts with PA2G4. Interacts with NR1D1. Interacts with AMBRA1. Interacts with HAPSTR1. Interacts with HAPSTR2. In hepatocytes, interacts with PAQR3; the interaction promotes PPARA poylubiquitination and STUB1-mediated degradation. In terms of processing, phosphorylated on tyrosine; phosphorylation is probably required for its ability to inhibit TP53 transactivation. As to expression, widely expressed.

It localises to the cytoplasm. The protein resides in the nucleus. The protein localises to the mitochondrion. It catalyses the reaction S-ubiquitinyl-[E2 ubiquitin-conjugating enzyme]-L-cysteine + [acceptor protein]-L-lysine = [E2 ubiquitin-conjugating enzyme]-L-cysteine + N(6)-ubiquitinyl-[acceptor protein]-L-lysine.. The protein operates within protein modification; protein ubiquitination. E3 ubiquitin-protein ligase which mediates ubiquitination and subsequent proteasomal degradation of target proteins. Regulates apoptosis by catalyzing the polyubiquitination and degradation of MCL1. Mediates monoubiquitination of DNA polymerase beta (POLB) at 'Lys-41', 'Lys-61' and 'Lys-81', thereby playing a role in base-excision repair. Also ubiquitinates the p53/TP53 tumor suppressor and core histones including H1, H2A, H2B, H3 and H4. Ubiquitinates MFN2 to negatively regulate mitochondrial fusion in response to decreased stearoylation of TFRC. Ubiquitination of MFN2 also takes place following induction of mitophagy; AMBRA1 acts as a cofactor for HUWE1-mediated ubiquitination. Regulates neural differentiation and proliferation by catalyzing the polyubiquitination and degradation of MYCN. May regulate abundance of CDC6 after DNA damage by polyubiquitinating and targeting CDC6 to degradation. Mediates polyubiquitination of PA2G4. Acts in concert with MYCBP2 to regulate the circadian clock gene expression by promoting the lithium-induced ubiquination and degradation of NR1D1. Binds to an upstream initiator-like sequence in the preprodynorphin gene. Mediates HAPSTR1 degradation, but is also a required cofactor in the pathway by which HAPSTR1 governs stress signaling. Acts as a regulator of the JNK and NF-kappa-B signaling pathways by mediating assembly of heterotypic 'Lys-63'-/'Lys-48'-linked branched ubiquitin chains that are then recognized by TAB2: HUWE1 mediates branching of 'Lys-48'-linked chains of substrates initially modified with 'Lys-63'-linked conjugates by TRAF6. 'Lys-63'-/'Lys-48'-linked branched ubiquitin chains protect 'Lys-63'-linkages from CYLD deubiquitination. Ubiquitinates PPARA in hepatocytes. This is E3 ubiquitin-protein ligase HUWE1 (Huwe1) from Mus musculus (Mouse).